We begin with the raw amino-acid sequence, 832 residues long: Adhesin AWP2 (832 aa).

The first 25 residues, 1-25 (MRKLPLFMAWKFWLICLYIIKVAST), serve as a signal peptide directing secretion. 16 N-linked (GlcNAc...) asparagine glycosylation sites follow: Asn-187, Asn-290, Asn-372, Asn-390, Asn-435, Asn-448, Asn-472, Asn-482, Asn-507, Asn-512, Asn-515, Asn-534, Asn-562, Asn-579, Asn-695, and Asn-721. Residues 722–747 (QTTSPSMHTTSLVGSENGVSAKTVND) form a disordered region.

The protein resides in the secreted. It localises to the cell wall. Its function is as follows. Mediates cell-substrate adhesion and promotes biofilm formation. In Candida glabrata (strain ATCC 2001 / BCRC 20586 / JCM 3761 / NBRC 0622 / NRRL Y-65 / CBS 138) (Yeast), this protein is Adhesin AWP2.